The sequence spans 461 residues: Trigger factor (461 aa).

The PPIase FKBP-type domain occupies 169–256 (GDTAVIDFAG…LKDLKIKELP (88 aa)). Positions 432–461 (PGEAIEPGSGEDAPPEVAAGATEPEAQPNS) are disordered.

Belongs to the FKBP-type PPIase family. Tig subfamily.

The protein resides in the cytoplasm. The catalysed reaction is [protein]-peptidylproline (omega=180) = [protein]-peptidylproline (omega=0). Its function is as follows. Involved in protein export. Acts as a chaperone by maintaining the newly synthesized protein in an open conformation. Functions as a peptidyl-prolyl cis-trans isomerase. The chain is Trigger factor from Gloeobacter violaceus (strain ATCC 29082 / PCC 7421).